A 412-amino-acid polypeptide reads, in one-letter code: MALKISPLSPQNIQELPPLSGVRIATAEAGIRDKGRTDLLFIVFDAPTSVAGVFTRSKCPSASVDHCRASLSHGVARGVVVNSGNANAFTGRKGKQTADAILHAAASALKVKENEIFIASTGVIGEPLEASSIVNLLPSMAETAEEGNWLEAARAIMTTDTFPKLATRKFYCGGKTVTINGIAKGAGMIAPDMATMLSFVVSDAAISSDILQSMLSEAVQGSFNSITVDSDTSTSDTLMMFATGKVKGNFPCFTSKSDPCYEVFSRQLSALLHELALQVVCDGEGARHLIEVCVTGATTENAAKTIALSIANSPLVKTAIAGEDANWGRVVMAVGKAGVEVDRDLLTIWFGEHRLAINGERDPDYHEEAISAYMRGKHITIRVDIGLGSGKATVWSCDLTKEYVMINGDYRS.

Positions 158, 184, 195, 284, 407, and 412 each coordinate substrate. The active-site Nucleophile is the threonine 195.

It belongs to the ArgJ family. Heterotetramer of two alpha and two beta chains.

The protein localises to the cytoplasm. The catalysed reaction is N(2)-acetyl-L-ornithine + L-glutamate = N-acetyl-L-glutamate + L-ornithine. It carries out the reaction L-glutamate + acetyl-CoA = N-acetyl-L-glutamate + CoA + H(+). The protein operates within amino-acid biosynthesis; L-arginine biosynthesis; L-ornithine and N-acetyl-L-glutamate from L-glutamate and N(2)-acetyl-L-ornithine (cyclic): step 1/1. It functions in the pathway amino-acid biosynthesis; L-arginine biosynthesis; N(2)-acetyl-L-ornithine from L-glutamate: step 1/4. Functionally, catalyzes two activities which are involved in the cyclic version of arginine biosynthesis: the synthesis of N-acetylglutamate from glutamate and acetyl-CoA as the acetyl donor, and of ornithine by transacetylation between N(2)-acetylornithine and glutamate. This chain is Arginine biosynthesis bifunctional protein ArgJ, found in Bartonella quintana (strain Toulouse) (Rochalimaea quintana).